Consider the following 210-residue polypeptide: Ribosomal RNA small subunit methyltransferase G (210 aa).

Residues G77, F82, 100–102, 128–129, and R141 each bind S-adenosyl-L-methionine; these read ERS and VE.

It belongs to the methyltransferase superfamily. RNA methyltransferase RsmG family.

It is found in the cytoplasm. In terms of biological role, specifically methylates the N7 position of a guanine in 16S rRNA. The sequence is that of Ribosomal RNA small subunit methyltransferase G from Borrelia recurrentis (strain A1).